We begin with the raw amino-acid sequence, 301 residues long: MSKTLTHLQQLEAESIHIIREVVAEFANPVMLYSIGKDSAVMLHLARKAFYPAPPPFPLLHVDTTWKFREMIQFRDRMAAECGLDLIVHVNEEGVKNGISPFTHGSALYTDVMKTEGLKQALDKYKFDAAFGGARRDEEKSRAKERIFSFRSANHRWDPKNQRPELWNLYNTRIKPGESIRVFPLSNWTELDVWQYIHLENIPIVPLYYAAVRPVVERDGMLIMVDDDRLELKPGETVQHKSVRFRTLGCYPLTGAVESTADTLPQIIQEMLLTRTSERQGRLIDHDQAGSMEKKKQEGYF.

It belongs to the PAPS reductase family. CysD subfamily. Heterodimer composed of CysD, the smaller subunit, and CysN.

It carries out the reaction sulfate + ATP + H(+) = adenosine 5'-phosphosulfate + diphosphate. It participates in sulfur metabolism; hydrogen sulfide biosynthesis; sulfite from sulfate: step 1/3. Functionally, with CysN forms the ATP sulfurylase (ATPS) that catalyzes the adenylation of sulfate producing adenosine 5'-phosphosulfate (APS) and diphosphate, the first enzymatic step in sulfur assimilation pathway. APS synthesis involves the formation of a high-energy phosphoric-sulfuric acid anhydride bond driven by GTP hydrolysis by CysN coupled to ATP hydrolysis by CysD. The sequence is that of Sulfate adenylyltransferase subunit 2 from Geotalea daltonii (strain DSM 22248 / JCM 15807 / FRC-32) (Geobacter daltonii).